The following is a 309-amino-acid chain: Taste receptor type 2 member 31 (309 aa).

Topologically, residues 1–2 (MT) are extracellular. The helical transmembrane segment at 3–23 (TFIPIIFSSLVMVMFVTGNFA) threads the bilayer. Over 24–55 (NGFIALVNSIESVKRQKISYADQILTALAVSR) the chain is Cytoplasmic. Residues 56–76 (IGLLWVLLLNWYSTVLNPAFY) traverse the membrane as a helical segment. At 77-100 (SVEVRTTAYNVWAVTGHFSNWLAT) the chain is on the extracellular side. Residues 101-121 (SLSIFYLLKIANFSNLIFLHL) traverse the membrane as a helical segment. At 122–126 (KRRVK) the chain is on the cytoplasmic side. A helical transmembrane segment spans residues 127 to 147 (SVILVMLLGPLLFLACQLFVI). The Extracellular portion of the chain corresponds to 148–181 (NMKEIVQTKEYEGNXTWKIKLRSAVYLSDATVTT). Residue N161 is glycosylated (N-linked (GlcNAc...) asparagine). Residues 182–202 (LGNLVPFTLTLLCFLLLICSL) form a helical membrane-spanning segment. Residues 203–229 (CKHLKKMQLHGKGSQDPSMKVHIKALQ) are Cytoplasmic-facing. Residues 230 to 250 (TVTSFLLLCAIYFLSIMISVW) form a helical membrane-spanning segment. Residues 251–259 (SLGSLKNKP) are Extracellular-facing. The chain crosses the membrane as a helical span at residues 260–280 (VFMFCKAMRFSYPSIHPFILI). At 281–309 (WGNKKLKQTFLSVLQQVRYWVKGEKPSSP) the chain is on the cytoplasmic side.

This sequence belongs to the G-protein coupled receptor T2R family.

It localises to the membrane. In terms of biological role, receptor that may play a role in the perception of bitterness and is gustducin-linked. May play a role in sensing the chemical composition of the gastrointestinal content. The activity of this receptor may stimulate alpha gustducin, mediate PLC-beta-2 activation and lead to the gating of TRPM5. The sequence is that of Taste receptor type 2 member 31 (TAS2R31) from Gorilla gorilla gorilla (Western lowland gorilla).